Reading from the N-terminus, the 1122-residue chain is Histone deacetylase 5 (1122 aa).

The interval 1–22 (MNSPNESDGMSGREPSLEILPR) is disordered. Residue K35 forms a Glycyl lysine isopeptide (Lys-Gly) (interchain with G-Cter in SUMO2) linkage. The interval 196-281 (KEPTPGGLNH…KVAERRSSPL (86 aa)) is disordered. The span at 247 to 258 (DSRDDFPLRKTA) shows a compositional bias: basic and acidic residues. At S259 the chain carries Phosphoserine; by AMPK, CaMK1, SIK1 and PKD/PRKD1. A compositionally biased stretch (basic and acidic residues) spans 272–281 (KVAERRSSPL). T292 carries the post-translational modification Phosphothreonine; by PKC. Disordered stretches follow at residues 302–343 (GAGP…NIPT) and 481–504 (MRTV…LPQS). The segment covering 312–327 (NSAPGSGPSSPNSSHS) has biased composition (low complexity). Residues 328–340 (TIAENGFTGSVPN) show a composition bias toward polar residues. Positions 494–504 (SRTQSSPLPQS) are enriched in low complexity. S498 carries the post-translational modification Phosphoserine; by AMPK, CaMK1, SIK1 and PKD/PRKD1. K533 carries the post-translational modification N6-acetyllysine. The disordered stretch occupies residues 536-625 (TKTGELPRQP…GPDLEEPGAG (90 aa)). Over residues 581 to 621 (STQEDLEEEDEEEDGEEEEDCIQVKDEEGESGAEEGPDLEE) the composition is skewed to acidic residues. 2 positions are modified to phosphoserine: S611 and S661. A histone deacetylase region spans residues 684–1028 (GVVYDTFMLK…VSALLSVELQ (345 aa)). Zn(2+) is bound by residues C696, C698, H704, and C781. H833 is a catalytic residue. The short motif at 1081 to 1122 (EEAETVSAMALLSVGAEQAQAAAAREHSPRPAEEPMEQEPAL) is the Nuclear export signal element. Residues 1097-1122 (EQAQAAAAREHSPRPAEEPMEQEPAL) form a disordered region. The segment covering 1104-1113 (AREHSPRPAE) has biased composition (basic and acidic residues). S1108 is modified (phosphoserine).

Belongs to the histone deacetylase family. HD type 2 subfamily. Interacts with AHRR, BAHD1, BCOR, HDAC7, HDAC9, CTBP1, MEF2C, NCOR2, NRIP1, PHB2 and a 14-3-3 chaperone protein. Interacts with BCL6, DDIT3/CHOP, GRK5, KDM5B and MYOCD. Interacts with EP300 in the presence of TFAP2C. Interacts with ANKRA2. Interacts with CUL7 (as part of the 3M complex); negatively regulated by ANKRA2. Interacts with ZBTB7B; the interaction allows the recruitment of HDAC4 on CD8 loci for deacetylation and possible inhibition of CD8 genes expression. Interacts with RARA. Phosphorylated by AMPK, CaMK1, SIK1 and PRKD1 at Ser-259 and Ser-498. The phosphorylation is required for the export to the cytoplasm and inhibition. Phosphorylated by the PKC kinases PKN1 and PKN2, impairing nuclear import. Phosphorylated by GRK5, leading to nuclear export of HDAC5 and allowing MEF2-mediated transcription. Post-translationally, ubiquitinated. Polyubiquitination however does not lead to its degradation.

The protein localises to the nucleus. It localises to the cytoplasm. The enzyme catalyses N(6)-acetyl-L-lysyl-[histone] + H2O = L-lysyl-[histone] + acetate. Functionally, responsible for the deacetylation of lysine residues on the N-terminal part of the core histones (H2A, H2B, H3 and H4). Histone deacetylation gives a tag for epigenetic repression and plays an important role in transcriptional regulation, cell cycle progression and developmental events. Histone deacetylases act via the formation of large multiprotein complexes. Involved in muscle maturation by repressing transcription of myocyte enhancer MEF2C. During muscle differentiation, it shuttles into the cytoplasm, allowing the expression of myocyte enhancer factors. Serves as a corepressor of RARA and causes its deacetylation. In association with RARA, plays a role in the repression of microRNA-10a and thereby in the inflammatory response. This chain is Histone deacetylase 5 (HDAC5), found in Pongo abelii (Sumatran orangutan).